Reading from the N-terminus, the 380-residue chain is G-protein coupled receptor (380 aa).

7 helical membrane-spanning segments follow: residues 26–46 (VISIFSLTTFVGLAITLYLGI), 60–80 (LVCCDVLIVNAVCLITLPLWV), 97–117 (FAGMFYTMNVYMSVWSCVIVT), 145–165 (VTILTLLVTFIGLFSLTETSI), 184–204 (AALGYTVPWLAIAIMIVHIIL), 220–240 (ILMWMMFTLLVTQGPYYSLSA), and 275–295 (VAMLVCTHALAITRMFSVPLI). An intrachain disulfide couples cysteine 95 to cysteine 170. The interval 328–380 (SQSKLLRGEENPNYDYSPKSVRIKPLKSPGGGDNSSLKDEGYDEESQNGFSIG) is disordered.

It belongs to the G-protein coupled receptor 1 family.

It localises to the host membrane. This chain is G-protein coupled receptor, found in Elephas maximus (Indian elephant).